Consider the following 766-residue polypeptide: 5-methyltetrahydropteroyltriglutamate--homocysteine methyltransferase (766 aa).

5-methyltetrahydropteroyltri-L-glutamate contacts are provided by residues 16–19 and lysine 122; that span reads RELK. L-homocysteine contacts are provided by residues 443–445 and glutamate 496; that span reads IGS. L-methionine contacts are provided by residues 443–445 and glutamate 496; that span reads IGS. Residues 527–528 and tryptophan 573 each bind 5-methyltetrahydropteroyltri-L-glutamate; that span reads RC. L-homocysteine is bound at residue aspartate 611. Aspartate 611 contacts L-methionine. Glutamate 617 provides a ligand contact to 5-methyltetrahydropteroyltri-L-glutamate. Zn(2+)-binding residues include histidine 653, cysteine 655, and glutamate 677. The active-site Proton donor is histidine 706. Cysteine 738 contributes to the Zn(2+) binding site.

It belongs to the vitamin-B12 independent methionine synthase family. The cofactor is Zn(2+).

It carries out the reaction 5-methyltetrahydropteroyltri-L-glutamate + L-homocysteine = tetrahydropteroyltri-L-glutamate + L-methionine. Its pathway is amino-acid biosynthesis; L-methionine biosynthesis via de novo pathway; L-methionine from L-homocysteine (MetE route): step 1/1. Catalyzes the transfer of a methyl group from 5-methyltetrahydrofolate to homocysteine resulting in methionine formation. In Pseudomonas putida (strain W619), this protein is 5-methyltetrahydropteroyltriglutamate--homocysteine methyltransferase.